The sequence spans 1141 residues: cGMP-inhibited 3',5'-cyclic phosphodiesterase 3A (1141 aa).

The disordered stretch occupies residues 1 to 42 (MAVPGDAARVRDKPVHSGVSQAPTAGRDCHHRADPASPRDSG). Transmembrane regions (helical) follow at residues 61–81 (LSSALCAGSLSFLLALLVRLV), 130–150 (LQPSALLFSLLCAFFWMGLYL), 160–180 (AVALLAACCGGEALVQIGLGV), 185–205 (LLSLPAAGVVLSCLAAATWLV), 210–230 (LGVLMIALTSAVRTVSLISLE), and 232–252 (FKVAWRPYLAYLAGVLGILLA). The residue at position 312 (Ser-312) is a Phosphoserine. 2 positions are modified to phosphoserine; by PKA and PKC: Ser-428 and Ser-438. Over residues 436-448 (RVSSTWTTTTSAT) the composition is skewed to low complexity. The tract at residues 436–482 (RVSSTWTTTTSATGLPTLEPAPVRRDRSTSIKLQEAPSSSPDSWNNP) is disordered. Over residues 465–482 (SIKLQEAPSSSPDSWNNP) the composition is skewed to polar residues. Ser-492, Ser-520, and Ser-524 each carry phosphoserine. Residues 590–640 (RPYSQGNPADEPLERSGVATRTPSRTDDTAQVTSDYETNNNSDSSDIVQNE) are disordered. The span at 608 to 637 (ATRTPSRTDDTAQVTSDYETNNNSDSSDIV) shows a compositional bias: polar residues. An interaction with SLFN12 region spans residues 669–1141 (KPILAPEPLV…EEIPTQKPDQ (473 aa)). Residues 674 to 1093 (PEPLVMDNLD…KMWKKVIEEE (420 aa)) enclose the PDEase domain. His-752 (proton donor) is an active-site residue. His-752 lines the AMP pocket. His-756, His-836, Asp-837, and Asp-950 together coordinate Mn(2+). Residues Asp-837, Asp-950, and Gln-1001 each contribute to the AMP site. Position 837 (Asp-837) interacts with Mg(2+). Disordered stretches follow at residues 1023-1062 (PGKWVEDSDESGDTDDPEEEEEEAPAPNEEETCENNESPK) and 1100-1141 (ENQS…KPDQ). Over residues 1029-1056 (DSDESGDTDDPEEEEEEAPAPNEEETCE) the composition is skewed to acidic residues. At Ser-1033 the chain carries Phosphoserine. Thr-1036 carries the phosphothreonine modification. Over residues 1100–1113 (ENQSLDQTPQSHSS) the composition is skewed to polar residues. Lys-1120 participates in a covalent cross-link: Glycyl lysine isopeptide (Lys-Gly) (interchain with G-Cter in SUMO2). Positions 1125–1141 (EKGKPRGEEIPTQKPDQ) are enriched in basic and acidic residues.

The protein belongs to the cyclic nucleotide phosphodiesterase family. PDE3 subfamily. As to quaternary structure, homodimer. Interacts with SLFN12; direct low affinity interaction which is stimulated by binding of 17beta-estradiol/E2 to PDE3A and that positively regulates the ribonuclease activity of SLFN12. Requires Mn(2+) as cofactor. The cofactor is Mg(2+).

The protein resides in the membrane. The protein localises to the cytoplasm. Its subcellular location is the cytosol. It carries out the reaction a nucleoside 3',5'-cyclic phosphate + H2O = a nucleoside 5'-phosphate + H(+). The enzyme catalyses 3',5'-cyclic AMP + H2O = AMP + H(+). The catalysed reaction is 3',5'-cyclic GMP + H2O = GMP + H(+). It catalyses the reaction 3',5'-cyclic UMP + H2O = UMP + H(+). Its activity is regulated as follows. Inhibited by cGMP. Inhibited by 17beta-estradiol. Inhibited by milrinone. Its function is as follows. Cyclic nucleotide phosphodiesterase with specificity for the second messengers cAMP and cGMP, which are key regulators of many important physiological processes. Also has activity toward cUMP. Independently of its catalytic activity it is part of an E2/17beta-estradiol-induced pro-apoptotic signaling pathway. E2 stabilizes the PDE3A/SLFN12 complex in the cytosol, promoting the dephosphorylation of SLFN12 and activating its pro-apoptotic ribosomal RNA/rRNA ribonuclease activity. This apoptotic pathway might be relevant in tissues with high concentration of E2 and be for instance involved in placenta remodeling. In Homo sapiens (Human), this protein is cGMP-inhibited 3',5'-cyclic phosphodiesterase 3A.